We begin with the raw amino-acid sequence, 172 residues long: Adenine phosphoribosyltransferase (172 aa).

It belongs to the purine/pyrimidine phosphoribosyltransferase family. As to quaternary structure, homodimer.

It is found in the cytoplasm. It catalyses the reaction AMP + diphosphate = 5-phospho-alpha-D-ribose 1-diphosphate + adenine. Its pathway is purine metabolism; AMP biosynthesis via salvage pathway; AMP from adenine: step 1/1. In terms of biological role, catalyzes a salvage reaction resulting in the formation of AMP, that is energically less costly than de novo synthesis. This chain is Adenine phosphoribosyltransferase, found in Exiguobacterium sp. (strain ATCC BAA-1283 / AT1b).